The following is a 569-amino-acid chain: Aspartate--tRNA ligase, cytoplasmic 2 (569 aa).

Residues 1–23 (MSEENNHKEKSKNEIKKEKKKIE) are disordered. The segment at 292–295 (QFYR) is aspartate. Arginine 314 serves as a coordination point for L-aspartate. ATP-binding positions include 314-316 (RTD) and 322-324 (RHL). 2 residues coordinate L-aspartate: serine 475 and arginine 479. 540–543 (GLER) serves as a coordination point for ATP.

Belongs to the class-II aminoacyl-tRNA synthetase family. Type 2 subfamily.

The protein resides in the cytoplasm. The catalysed reaction is tRNA(Asp) + L-aspartate + ATP = L-aspartyl-tRNA(Asp) + AMP + diphosphate. In Dictyostelium discoideum (Social amoeba), this protein is Aspartate--tRNA ligase, cytoplasmic 2 (aspS2).